A 500-amino-acid chain; its full sequence is Nucleolar and spindle-associated protein 1 (500 aa).

Disordered regions lie at residues 48–204 (KNET…NFKK), 241–299 (TKKS…ASKS), 319–353 (VRFSEATKDNEHKRSLIKTPARKSSSFLAVTPESE), and 365–500 (ELLP…VPVK). A compositionally biased stretch (basic residues) spans 82–92 (THRRGRGRKPI). Positions 113-127 (NMASSIDRTQQQNCT) are enriched in polar residues. The segment covering 264–274 (SRLSLLSPLPR) has biased composition (low complexity). Polar residues predominate over residues 276–298 (TGASPSRTPMSQRRSCRSSTASK). Residues 323-332 (EATKDNEHKR) are compositionally biased toward basic and acidic residues. Polar residues predominate over residues 380-392 (ITLNTTTQPSPAT). Over residues 442-451 (PWGESKENKP) the composition is skewed to basic and acidic residues. Positions 452–469 (DPNSNVSVLKNNYKQPHL) are enriched in polar residues.

Belongs to the NUSAP family. Interacts with DNA, microtubules, ipo7, kpna2 and kpnb1. Microtubule stabilization is inhibited by ipo7 and kpna2, while microtubule bundling is inhibited by kpnb1. Active GTP-bound ran causes dissociation of ipo7 and kpnb1.

It localises to the cytoplasm. The protein resides in the nucleus. It is found in the cytoskeleton. Its subcellular location is the spindle. In terms of biological role, microtubule-associated protein with the capacity to bundle and stabilize microtubules. May associate with chromosomes and promote the organization of meiotic or mitotic spindle microtubules around them. In Xenopus tropicalis (Western clawed frog), this protein is Nucleolar and spindle-associated protein 1 (nusap1).